The chain runs to 104 residues: Gastrin (104 aa).

A signal peptide spans 1 to 21; it reads MQRLCVCVLILALALTAFSEA. Residues 22–49 form a disordered region; the sequence is SWKPRSQLQDAPSGPGANGGLEPHWLNR. A propeptide spanning residues 22-58 is cleaved from the precursor; it reads SWKPRSQLQDAPSGPGANGGLEPHWLNRLGPASHHRW. A pyrrolidone carboxylic acid mark is found at glutamine 59 and glutamine 76. Tyrosine 87 is subject to Sulfotyrosine. Phenylalanine 92 is subject to Phenylalanine amide. Serine 96 carries the post-translational modification Phosphoserine. Residues 96–104 constitute a propeptide that is removed on maturation; the sequence is SAEDGDQHP.

The protein belongs to the gastrin/cholecystokinin family.

The protein localises to the secreted. In terms of biological role, gastrin stimulates the stomach mucosa to produce and secrete hydrochloric acid and the pancreas to secrete its digestive enzymes. It also stimulates smooth muscle contraction and increases blood circulation and water secretion in the stomach and intestine. The sequence is that of Gastrin (GAST) from Felis catus (Cat).